A 173-amino-acid polypeptide reads, in one-letter code: Transcriptional regulator ERG homolog (173 aa).

A DNA-binding region (ETS) is located at residues 1–84; the sequence is SGQIQLWQFL…HGKRYAYKFD (84 aa).

It belongs to the ETS family.

Its subcellular location is the nucleus. Acts as a transcriptional activator. The polypeptide is Transcriptional regulator ERG homolog (ERG) (Lytechinus variegatus (Green sea urchin)).